The following is an 816-amino-acid chain: Neuroligin-4, X-linked (816 aa).

The signal sequence occupies residues Met-1–Ser-41. The Extracellular segment spans residues Gln-42–Ser-676. A glycan (N-linked (GlcNAc...) asparagine) is linked at Asn-102. Intrachain disulfides connect Cys-110–Cys-146 and Cys-306–Cys-317. The interval Gln-359–Asn-364 is interaction with NRXN1. A disulfide bridge connects residues Cys-476 and Cys-510. N-linked (GlcNAc...) asparagine glycosylation is present at Asn-511. The disordered stretch occupies residues Thr-636–Glu-659. The segment covering His-649–Pro-658 has biased composition (basic and acidic residues). Residues Val-677–Tyr-697 traverse the membrane as a helical segment. The Cytoplasmic segment spans residues Tyr-698–Val-816. Position 712 is a phosphoserine (Ser-712).

This sequence belongs to the type-B carboxylesterase/lipase family. Homodimer. Interacts with NRXN1 in a calcium-dependent manner. Interaction with neurexins is mediated by heparan sulfate glycan modification on neurexin. Interacts through its C-terminus with DLG4/PSD-95 third PDZ domain. In terms of tissue distribution, expressed at highest levels in heart. Expressed at lower levels in liver, skeletal muscle and pancreas and at very low levels in brain.

Its subcellular location is the cell membrane. It is found in the postsynaptic density membrane. In terms of biological role, cell surface protein involved in cell-cell-interactions via its interactions with neurexin family members. The chain is Neuroligin-4, X-linked (NLGN4X) from Homo sapiens (Human).